An 82-amino-acid chain; its full sequence is Defensin-like protein 7 (82 aa).

The N-terminal stretch at 1 to 29 is a signal peptide; the sequence is MKSSTTSMQLIPTLFFLTILLASPEMVEG. Residue Gln30 is modified to Pyrrolidone carboxylic acid. Disulfide bonds link Cys33–Cys77, Cys44–Cys64, Cys50–Cys71, and Cys54–Cys73.

The protein belongs to the DEFL family. Expressed in stems, roots, rosette leaves and flower buds.

The protein localises to the secreted. The sequence is that of Defensin-like protein 7 (LCR75) from Arabidopsis thaliana (Mouse-ear cress).